A 109-amino-acid chain; its full sequence is Nucleoid-associated protein LJ_0424 (109 aa).

Belongs to the YbaB/EbfC family. Homodimer.

It localises to the cytoplasm. The protein resides in the nucleoid. In terms of biological role, binds to DNA and alters its conformation. May be involved in regulation of gene expression, nucleoid organization and DNA protection. The chain is Nucleoid-associated protein LJ_0424 from Lactobacillus johnsonii (strain CNCM I-12250 / La1 / NCC 533).